The sequence spans 393 residues: MDSQGRKVIVVDNGTGFVKCGYAGTNFPAHIFPSMVGRPIVRSTQRVGNIEIKDLMVGEECSQLRQMLDINYPMDNGIVRNWDDMGHVWDHTFGPEKLDIDPKECKLLLTEPPLNPNSNREKMFQVMFEQYGFNSIYVAAVLTLYAQGLLTGVVVDSGDGVTHICPVYEGFALHHLTRRLDIAGRDITKYLIKLLLQRGYNFNHSADFETVRQMKEKLCYIAYDVEQEERLALETTVLSQQYTLPDGRVIRLGGERFEAPEILFQPHLINVEKAGLSELLFGCIQASDIDTRLDFYKHIVLSGGTTMYPGLPSRLEKELKQLYLDRVLHGNTDAFQKFKIRIEAPPSRKHMVFLGGAVLANLMKDRDQDFWVSKKEYEEGGIARCMAKLGIKA.

Residues 158–160 (GDG), 212–216 (RQMKE), and 303–308 (GGTTMY) contribute to the ATP site.

The protein belongs to the actin family. ARP2 subfamily. In terms of assembly, component of the Arp2/3 complex.

The protein localises to the cytoplasm. It is found in the cytoskeleton. Functionally, functions as ATP-binding component of the Arp2/3 complex which is involved in regulation of actin polymerization and together with an activating nucleation-promoting factor (NPF) mediates the formation of branched actin networks. Seems to contact the pointed end of the daughter actin filament. The sequence is that of Actin-related protein 2 (arx-2) from Caenorhabditis briggsae.